The sequence spans 228 residues: Carboxy-S-adenosyl-L-methionine synthase (228 aa).

S-adenosyl-L-methionine is bound by residues tyrosine 30, 55-57 (GSS), 79-80 (DN), and 103-104 (DV).

Belongs to the class I-like SAM-binding methyltransferase superfamily. Cx-SAM synthase family.

The enzyme catalyses prephenate + S-adenosyl-L-methionine = carboxy-S-adenosyl-L-methionine + 3-phenylpyruvate + H2O. Functionally, catalyzes the conversion of S-adenosyl-L-methionine (SAM) to carboxy-S-adenosyl-L-methionine (Cx-SAM). The protein is Carboxy-S-adenosyl-L-methionine synthase of Staphylococcus epidermidis (strain ATCC 35984 / DSM 28319 / BCRC 17069 / CCUG 31568 / BM 3577 / RP62A).